The following is a 121-amino-acid chain: Large ribosomal subunit protein bL12 (121 aa).

This sequence belongs to the bacterial ribosomal protein bL12 family. In terms of assembly, homodimer. Part of the ribosomal stalk of the 50S ribosomal subunit. Forms a multimeric L10(L12)X complex, where L10 forms an elongated spine to which 2 to 4 L12 dimers bind in a sequential fashion. Binds GTP-bound translation factors.

Forms part of the ribosomal stalk which helps the ribosome interact with GTP-bound translation factors. Is thus essential for accurate translation. This is Large ribosomal subunit protein bL12 from Clostridioides difficile (strain 630) (Peptoclostridium difficile).